The sequence spans 608 residues: Chaperone protein HtpG (608 aa).

Positions 1–332 (MQFQTEVNQL…VEDLPLNVSR (332 aa)) are a; substrate-binding. A b region spans residues 333–536 (EILQENQILK…KNKPDFAMQQ (204 aa)). The interval 537–608 (LLKQMGQEQN…LTKIINKAFS (72 aa)) is c.

The protein belongs to the heat shock protein 90 family. In terms of assembly, homodimer.

The protein resides in the cytoplasm. Its function is as follows. Molecular chaperone. Has ATPase activity. This is Chaperone protein HtpG from Campylobacter jejuni subsp. jejuni serotype O:23/36 (strain 81-176).